The chain runs to 247 residues: Exosome complex component Rrp4 (247 aa).

The S1 motif domain maps to 75–148 (DDLVIGIVEN…RDPVITVKGK (74 aa)). Residues 154–220 (TEGVVVDVKP…QAIKLIELKA (67 aa)) form the KH domain.

Belongs to the RRP4 family. In terms of assembly, component of the archaeal exosome complex. Forms a trimer of Rrp4 and/or Csl4 subunits. The trimer associates with a hexameric ring-like arrangement composed of 3 Rrp41-Rrp42 heterodimers.

The protein resides in the cytoplasm. Non-catalytic component of the exosome, which is a complex involved in RNA degradation. Increases the RNA binding and the efficiency of RNA degradation. Confers strong poly(A) specificity to the exosome. This is Exosome complex component Rrp4 from Thermosphaera aggregans (strain DSM 11486 / M11TL).